The sequence spans 527 residues: Palmitoleoyl-protein carboxylesterase NOTUM (527 aa).

A signal peptide spans 1–19; it reads MKSYLILNTLLLSLLKING. Residues Asn-64, Asn-86, and Asn-104 are each glycosylated (N-linked (GlcNAc...) asparagine). Ser-203 functions as the Charge relay system in the catalytic mechanism. N-linked (GlcNAc...) asparagine glycosylation occurs at Asn-249. Residues Asp-311 and His-359 each act as charge relay system in the active site. An N-linked (GlcNAc...) asparagine glycan is attached at Asn-451.

The protein belongs to the pectinacetylesterase family. Notum subfamily. Expressed in the anterior pole.

The protein localises to the secreted. The enzyme catalyses [Wnt protein]-O-(9Z)-hexadecenoyl-L-serine + H2O = [Wnt protein]-L-serine + (9Z)-hexadecenoate + H(+). Carboxylesterase that acts as a key negative regulator of the Wnt signaling pathway. Acts by specifically mediating depalmitoleoylation of WNT proteins. Serine palmitoleoylation of WNT proteins is required for efficient binding to frizzled receptors. Promotes head regeneration following amputation by inhibiting the Wnt signaling pathway. The polypeptide is Palmitoleoyl-protein carboxylesterase NOTUM (Schmidtea mediterranea (Freshwater planarian flatworm)).